Here is a 192-residue protein sequence, read N- to C-terminus: uncharacterized protein (192 aa).

Residues 29–160 (HRQAAVLIPI…PLDIYRRGDS (132 aa)) form the Nudix hydrolase domain. Residues 67–89 (GAVDDTDASVIAAALREAEEEVA) carry the Nudix box motif. Positions 83 and 87 each coordinate Mg(2+).

Belongs to the Nudix hydrolase family. PCD1 subfamily. Mn(2+) is required as a cofactor. It depends on Mg(2+) as a cofactor.

In terms of biological role, probably mediates the hydrolysis of some nucleoside diphosphate derivatives. This is an uncharacterized protein from Escherichia coli (strain SMS-3-5 / SECEC).